Reading from the N-terminus, the 518-residue chain is Arp2/3 complex-activating protein rickA (518 aa).

The interval 310–518 (SAAQLQSAET…ERNAKQSQQR (209 aa)) is disordered. 2 stretches are compositionally biased toward pro residues: residues 344–354 (TPPPAPPPPMP) and 382–401 (VPPP…PPPV). The segment covering 418-430 (QPRPAVDTTNLMK) has biased composition (polar residues). The region spanning 424 to 441 (DTTNLMKQIQGGFNLKKI) is the WH2 domain. Basic and acidic residues predominate over residues 439–461 (KKIEYGEDGKPIPKNKEDTKETS). A compositionally biased stretch (polar residues) spans 488-498 (GTDSGWASDVS).

As to quaternary structure, homodimer.

Its subcellular location is the cell surface. Functionally, recruits and activates the Arp2/3 complex, which in turn leads to actin polymerization, promoting Rickettsia motility during infection. The sequence is that of Arp2/3 complex-activating protein rickA (rickA) from Rickettsia bellii (strain RML369-C).